The sequence spans 330 residues: MKKSFILQQQEISFAKNTFTTKLAEHLGLVEVQGPILSQVGNGIQDNLSGKEKPVQVNVKMIEDATFEVVHSLAKWKRHTLARFGFAEGEGLFVHMKALRPDEDSLDQTHSVYVDQWDWEKVIPAGRRNLNYLKETVRSIYAAIVETQEAVEQKFGLKAFLPKEITFIHSEDLARDYPHMTDKERENEICKKYGAVFLIGIGGDLPDGKPHDMRAPDYDDWTTSSEGEYKGLNGDILVWNPVLNRAFELSSMGIRVDETALRRQLALTHDEERLNFAWHQDLINGRMPLSIGGGIGQSRLAMLLLQKHHIGEVQSSVWPKTVMEQFENIL.

This sequence belongs to the class-II aminoacyl-tRNA synthetase family. AsnA subfamily.

The protein resides in the cytoplasm. The enzyme catalyses L-aspartate + NH4(+) + ATP = L-asparagine + AMP + diphosphate + H(+). It participates in amino-acid biosynthesis; L-asparagine biosynthesis; L-asparagine from L-aspartate (ammonia route): step 1/1. The sequence is that of Aspartate--ammonia ligase from Actinobacillus succinogenes (strain ATCC 55618 / DSM 22257 / CCUG 43843 / 130Z).